The following is a 445-amino-acid chain: Type II methyltransferase M.Bpa9945I (445 aa).

In terms of domain architecture, SAM-dependent MTase C5-type spans 1-444; sequence MIVIDLFSGA…RAVKDVINGH (444 aa). The active site involves C136.

It belongs to the class I-like SAM-binding methyltransferase superfamily. C5-methyltransferase family.

It localises to the cytoplasm. The enzyme catalyses a 2'-deoxycytidine in DNA + S-adenosyl-L-methionine = a 5-methyl-2'-deoxycytidine in DNA + S-adenosyl-L-homocysteine + H(+). Component of antiviral defense system DISARM (defense island system associated with restriction-modification), composed of DrmE, DrmA, DrmB, DrmC and DrmMII. DISARM is probably a multi-gene restriction module, this subunit is a DNA methylase. Expression of DISARM in B.subtilis (strain BEST7003) confers resistance to phages Nf, phi29, phi105, phi3T, SPO1, SPR and SPP1. Protection is over 10(7)-fold against phi3T, 10(4)-10(5)-fold against Nf, phi29, phi105 and SPR, 100-fold against SPO1 and 10-fold against SPP1. DISARM does not interfere with phage adsorption, but instead interferes with (phi3T) DNA replication early in its cycle, preventing replication, circularization and lysogeny and probably causes phage DNA degradation (DNA is degraded in SPP1-infected cells). Expression of this methylase alone leads to highly methylated phage, however they are still susceptible to the DISARM system. In terms of biological role, a methylase, recognizes the double-stranded sequence 5'-CCWGG-3', methylates C-2 on both strands. Phage Nf does not have any 5'-CCWGG-3' motifs but is still targeted by the DISARM system. The polypeptide is Type II methyltransferase M.Bpa9945I (Bacillus paralicheniformis (strain ATCC 9945a / NCIMB 11709 / CD-2)).